Reading from the N-terminus, the 318-residue chain is Acetyl-coenzyme A carboxylase carboxyl transferase subunit alpha (318 aa).

The CoA carboxyltransferase C-terminal domain maps to 43-293 (RSQTALRDLY…GDGIAAALKS (251 aa)).

This sequence belongs to the AccA family. In terms of assembly, acetyl-CoA carboxylase is a heterohexamer composed of biotin carboxyl carrier protein (AccB), biotin carboxylase (AccC) and two subunits each of ACCase subunit alpha (AccA) and ACCase subunit beta (AccD).

It localises to the cytoplasm. The catalysed reaction is N(6)-carboxybiotinyl-L-lysyl-[protein] + acetyl-CoA = N(6)-biotinyl-L-lysyl-[protein] + malonyl-CoA. Its pathway is lipid metabolism; malonyl-CoA biosynthesis; malonyl-CoA from acetyl-CoA: step 1/1. In terms of biological role, component of the acetyl coenzyme A carboxylase (ACC) complex. First, biotin carboxylase catalyzes the carboxylation of biotin on its carrier protein (BCCP) and then the CO(2) group is transferred by the carboxyltransferase to acetyl-CoA to form malonyl-CoA. In Bartonella bacilliformis (strain ATCC 35685 / KC583 / Herrer 020/F12,63), this protein is Acetyl-coenzyme A carboxylase carboxyl transferase subunit alpha.